We begin with the raw amino-acid sequence, 101 residues long: Protein Tat (101 aa).

Positions 1–24 (MEPVDPNLEPWNHPGSQPKTACNN) are interaction with human CREBBP. Residues 1 to 48 (MEPVDPNLEPWNHPGSQPKTACNNCYCKRCSYHCLVCFQTKGLGISYG) are transactivation. Cysteine 22, cysteine 25, and cysteine 27 together coordinate Zn(2+). Positions 22–37 (CNNCYCKRCSYHCLVC) are cysteine-rich. At lysine 28 the chain carries N6-acetyllysine; by host PCAF. Positions 30, 33, 34, and 37 each coordinate Zn(2+). Residues 38-48 (FQTKGLGISYG) form a core region. The tract at residues 47-101 (YGRKKRRQRRSAPPSSEDHQNPIPKQPLPQTRGDQTGSEESKKKVESKTETDPFD) is disordered. The short motif at 49 to 57 (RKKRRQRRS) is the Nuclear localization signal, RNA-binding (TAR), and protein transduction element. Residues 49 to 86 (RKKRRQRRSAPPSSEDHQNPIPKQPLPQTRGDQTGSEE) are interaction with the host capping enzyme RNGTT. 2 positions are modified to N6-acetyllysine; by host EP300 and GCN5L2: lysine 50 and lysine 51. 2 positions are modified to asymmetric dimethylarginine; by host PRMT6: arginine 52 and arginine 53. Lysine 71 is covalently cross-linked (Glycyl lysine isopeptide (Lys-Gly) (interchain with G-Cter in ubiquitin)). Residues 78–80 (RGD) carry the Cell attachment site motif. A compositionally biased stretch (basic and acidic residues) spans 85–101 (EESKKKVESKTETDPFD).

It belongs to the lentiviruses Tat family. In terms of assembly, interacts with host CCNT1. Associates with the P-TEFb complex composed at least of Tat, P-TEFb (CDK9 and CCNT1), TAR RNA, RNA Pol II. Recruits the HATs CREBBP, TAF1/TFIID, EP300, PCAF and GCN5L2. Interacts with host KAT5/Tip60; this interaction targets the latter to degradation. Interacts with the host deacetylase SIRT1. Interacts with host capping enzyme RNGTT; this interaction stimulates RNGTT. Binds to host KDR, and to the host integrins ITGAV/ITGB3 and ITGA5/ITGB1. Interacts with host KPNB1/importin beta-1 without previous binding to KPNA1/importin alpha-1. Interacts with EIF2AK2. Interacts with host nucleosome assembly protein NAP1L1; this interaction may be required for the transport of Tat within the nucleus, since the two proteins interact at the nuclear rim. Interacts with host C1QBP/SF2P32; this interaction involves lysine-acetylated Tat. Interacts with the host chemokine receptors CCR2, CCR3 and CXCR4. Interacts with host DPP4/CD26; this interaction may trigger an anti-proliferative effect. Interacts with host LDLR. Interacts with the host extracellular matrix metalloproteinase MMP1. Interacts with host PRMT6; this interaction mediates Tat's methylation. Interacts with, and is ubiquitinated by MDM2/Hdm2. Interacts with host PSMC3 and HTATIP2. Interacts with STAB1; this interaction may overcome SATB1-mediated repression of IL2 and IL2RA (interleukin) in T cells by binding to the same domain than HDAC1. Interacts (when acetylated) with human CDK13, thereby increasing HIV-1 mRNA splicing and promoting the production of the doubly spliced HIV-1 protein Nef. Interacts with host TBP; this interaction modulates the activity of transcriptional pre-initiation complex. Interacts with host RELA. Interacts with host PLSCR1; this interaction negatively regulates Tat transactivation activity by altering its subcellular distribution. Asymmetrical arginine methylation by host PRMT6 seems to diminish the transactivation capacity of Tat and affects the interaction with host CCNT1. In terms of processing, acetylation by EP300, CREBBP, GCN5L2/GCN5 and PCAF regulates the transactivation activity of Tat. EP300-mediated acetylation of Lys-50 promotes dissociation of Tat from the TAR RNA through the competitive binding to PCAF's bromodomain. In addition, the non-acetylated Tat's N-terminus can also interact with PCAF. PCAF-mediated acetylation of Lys-28 enhances Tat's binding to CCNT1. Lys-50 is deacetylated by SIRT1. Post-translationally, polyubiquitination by host MDM2 does not target Tat to degradation, but activates its transactivation function and fosters interaction with CCNT1 and TAR RNA. Phosphorylated by EIF2AK2 on serine and threonine residues adjacent to the basic region important for TAR RNA binding and function. Phosphorylation of Tat by EIF2AK2 is dependent on the prior activation of EIF2AK2 by dsRNA.

The protein resides in the host nucleus. Its subcellular location is the host nucleolus. The protein localises to the host cytoplasm. It is found in the secreted. In terms of biological role, transcriptional activator that increases RNA Pol II processivity, thereby increasing the level of full-length viral transcripts. Recognizes a hairpin structure at the 5'-LTR of the nascent viral mRNAs referred to as the transactivation responsive RNA element (TAR) and recruits the cyclin T1-CDK9 complex (P-TEFb complex) that will in turn hyperphosphorylate the RNA polymerase II to allow efficient elongation. The CDK9 component of P-TEFb and other Tat-activated kinases hyperphosphorylate the C-terminus of RNA Pol II that becomes stabilized and much more processive. Other factors such as HTATSF1/Tat-SF1, SUPT5H/SPT5, and HTATIP2 are also important for Tat's function. Besides its effect on RNA Pol II processivity, Tat induces chromatin remodeling of proviral genes by recruiting the histone acetyltransferases (HATs) CREBBP, EP300 and PCAF to the chromatin. This also contributes to the increase in proviral transcription rate, especially when the provirus integrates in transcriptionally silent region of the host genome. To ensure maximal activation of the LTR, Tat mediates nuclear translocation of NF-kappa-B by interacting with host RELA. Through its interaction with host TBP, Tat may also modulate transcription initiation. Tat can reactivate a latently infected cell by penetrating in it and transactivating its LTR promoter. In the cytoplasm, Tat is thought to act as a translational activator of HIV-1 mRNAs. Extracellular circulating Tat can be endocytosed by surrounding uninfected cells via the binding to several surface receptors such as CD26, CXCR4, heparan sulfate proteoglycans (HSPG) or LDLR. Neurons are rarely infected, but they internalize Tat via their LDLR. Through its interaction with nuclear HATs, Tat is potentially able to control the acetylation-dependent cellular gene expression. Modulates the expression of many cellular genes involved in cell survival, proliferation or in coding for cytokines or cytokine receptors. Tat plays a role in T-cell and neurons apoptosis. Tat induced neurotoxicity and apoptosis probably contribute to neuroAIDS. Circulating Tat also acts as a chemokine-like and/or growth factor-like molecule that binds to specific receptors on the surface of the cells, affecting many cellular pathways. In the vascular system, Tat binds to ITGAV/ITGB3 and ITGA5/ITGB1 integrins dimers at the surface of endothelial cells and competes with bFGF for heparin-binding sites, leading to an excess of soluble bFGF. In Human immunodeficiency virus type 1 group M subtype C (isolate 92BR025) (HIV-1), this protein is Protein Tat.